We begin with the raw amino-acid sequence, 416 residues long: MSTATDTAAPAKKRGSGLFQGLQKVGRSLQLPIAVLPAAGIMVRLGQDDIFGKDGLGWDKVAAVFNNAGGALTGSLPILFCIGVAIGFAKKADGSTALAAVVGFLVYSKVLEAFPVTEAVVQDGADVAATYNDPGVLGGIIMGLLAAVLWQRYHRKKLVDWLGFFNGRRLVPIIMAFVGIVVGVFFGLVWEPIGDGISNFGEWMTGLGSGGAALFGGVNRALIPVGMHQFVNTVAWFQLGDFTNSAGDVVHGDITRFLAGDPSAGIFQAGFFPIMMFGLPAAALAMAHTARPERRKAVLGMMISLAATSFVTGVTEPIEFSFMFIAPVLYVLHAVLTAISMAITWGLGVHAGFNFSAGFIDYALNWHLATKPWLIIPIGLVFAAIYYVTFRFAIVKFNLKTPGREPEEEVEDLTKA.

The 391-residue stretch at 16-406 (SGLFQGLQKV…FNLKTPGREP (391 aa)) folds into the PTS EIIC type-1 domain. 10 helical membrane passes run 68–88 (AGGA…AIGF), 96–116 (TALA…AFPV), 130–150 (TYND…AVLW), 170–190 (LVPI…GLVW), 196–216 (GISN…ALFG), 266–286 (IFQA…ALAM), 298–318 (VLGM…TEPI), 323–343 (MFIA…SMAI), 344–364 (TWGL…DYAL), and 375–395 (IIPI…FAIV).

The protein resides in the cell membrane. Functionally, the phosphoenolpyruvate-dependent sugar phosphotransferase system (sugar PTS), a major carbohydrate active transport system, catalyzes the phosphorylation of incoming sugar substrates concomitantly with their translocation across the cell membrane. This system is involved in N-acetylglucosamine (GlcNAc) transport. High-affinity permease, which exhibits a narrow specificity for GlcNAc. Essential for C-signaling between vegetative growth and development. The protein is PTS system N-acetylglucosamine-specific EIIC component of Streptomyces coelicolor (strain ATCC BAA-471 / A3(2) / M145).